We begin with the raw amino-acid sequence, 460 residues long: GTPase Der (460 aa).

2 EngA-type G domains span residues 2–166 and 175–353; these read KTIA…AEER and TRIA…QERK. Residues 8 to 15, 55 to 59, 118 to 121, 181 to 188, 228 to 232, and 293 to 296 contribute to the GTP site; these read GRPNVGKS, DTGGL, NKLD, GQPNAGKS, DTAGL, and NKID. The KH-like domain occupies 354–446; sequence KRIPTHRLTQ…LLWKWRKAEG (93 aa).

The protein belongs to the TRAFAC class TrmE-Era-EngA-EngB-Septin-like GTPase superfamily. EngA (Der) GTPase family. As to quaternary structure, associates with the 50S ribosomal subunit.

Its function is as follows. GTPase that plays an essential role in the late steps of ribosome biogenesis. The polypeptide is GTPase Der (Methylacidiphilum infernorum (isolate V4) (Methylokorus infernorum (strain V4))).